The chain runs to 196 residues: Pyridoxal 5'-phosphate synthase subunit PdxT (196 aa).

Residue 47–49 coordinates L-glutamine; that stretch reads GES. The active-site Nucleophile is Cys79. Residues Arg106 and 134 to 135 each bind L-glutamine; that span reads IR. Catalysis depends on charge relay system residues His170 and Glu172.

The protein belongs to the glutaminase PdxT/SNO family. As to quaternary structure, in the presence of PdxS, forms a dodecamer of heterodimers. Only shows activity in the heterodimer.

The catalysed reaction is aldehydo-D-ribose 5-phosphate + D-glyceraldehyde 3-phosphate + L-glutamine = pyridoxal 5'-phosphate + L-glutamate + phosphate + 3 H2O + H(+). The enzyme catalyses L-glutamine + H2O = L-glutamate + NH4(+). It functions in the pathway cofactor biosynthesis; pyridoxal 5'-phosphate biosynthesis. Catalyzes the hydrolysis of glutamine to glutamate and ammonia as part of the biosynthesis of pyridoxal 5'-phosphate. The resulting ammonia molecule is channeled to the active site of PdxS. The polypeptide is Pyridoxal 5'-phosphate synthase subunit PdxT (Bacillus cereus (strain Q1)).